A 489-amino-acid chain; its full sequence is Cytochrome P450 monooxygenase ataF (489 aa).

Residues 12–32 (WLEHSAVIATLFAFGTALFLV) traverse the membrane as a helical segment. Asn-289 carries N-linked (GlcNAc...) asparagine glycosylation. Cys-434 lines the heme pocket.

It belongs to the cytochrome P450 family. Requires heme as cofactor.

The protein localises to the membrane. It functions in the pathway mycotoxin biosynthesis. Functionally, cytochrome P450 monooxygenase; part of the gene cluster that mediates the biosynthesis of acetylaranotin, a member of the epipolythiodioxopiperazine (ETP) class of toxins characterized by a disulfide-bridged cyclic dipeptide. The first step of acetylaranotin biosynthesis is performed by the NRPS ataP which produces diketopiperazine cyclo-L-Phe-L-Phe via the condensation of 2 phenylalanines (L-Phe). The ataC domain of ataTC then catalyzes the formation of bishydroxylation of cyclo-L-Phe-L-Phe. The glutathione S-transferase domain ataG in ataIMG further catalyzes the conjugation of two glutathiones to the bishydroxylated intermediate. Next, the dipeptidase ataJ removes the Glu residues. The following step is performed by the carbon sulfur lyase domain ataI of ataIMG which may convert the bis-cysteinyl adduct to yield an epidithiol intermediate. The ataT domain from ataTC then catalyzes the oxidation of the free dithiols, followed by a cyclization step catalyzed by the cytochrome P450 ataF. AtaF probably acts as an epoxidase to promote a dual epoxidation formation at C8 and C9 along with C8' and C9', followed by the spontaneous nucleophilic attack of the amide nitrogens N10 and N10' to yield an intermediate with the pyrrolidine partial structure. The final steps of acetylaranotin biosynthesis involve the acetylation and ring rearrangement of an epitetrathiodiketopiperazine intermediate to produce acetylaranotin. AtaH probably catalyzes the acetylation of epitetrathiodiketopiperazine to produce a diacetate and ataY is responsible for the formation of the dihydrooxepin moiety that converts the diacetate intermediate to acetylaranotin via acetylapoaranotin. Both enzymes could function independently in the absence of the other. The acetylaranotin bis-thiomethyltransferase ataS located outside of acetylaranotin gene cluster is the main thiomethyltransferase responsible for converting acetylaranotin and its related intermediates to their methylated forms. The protein is Cytochrome P450 monooxygenase ataF of Aspergillus terreus (strain NIH 2624 / FGSC A1156).